The primary structure comprises 199 residues: Peroxiredoxin-1 (199 aa).

N-acetylserine is present on serine 2. A Thioredoxin domain is found at 6 to 165; that stretch reads AKIGYPAPNF…ILRLVQAFQF (160 aa). Lysine 7 bears the N6-acetyllysine; alternate mark. Residue lysine 7 forms a Glycyl lysine isopeptide (Lys-Gly) (interchain with G-Cter in SUMO2); alternate linkage. Lysine 16 bears the N6-acetyllysine mark. Position 32 is a phosphoserine (serine 32). The Cysteine sulfenic acid (-SOH) intermediate role is filled by cysteine 52. Residue threonine 90 is modified to Phosphothreonine. A Glycyl lysine isopeptide (Lys-Gly) (interchain with G-Cter in SUMO2) cross-link involves residue lysine 120. Position 136 is an N6-acetyllysine (lysine 136). Residues 176–199 form a disordered region; the sequence is GWKPGSDTIKPDVQKSKEYFSKQK. The span at 184–199 shows a compositional bias: basic and acidic residues; it reads IKPDVQKSKEYFSKQK. Residue lysine 185 forms a Glycyl lysine isopeptide (Lys-Gly) (interchain with G-Cter in SUMO1) linkage. Lysine 197 bears the N6-acetyllysine mark.

It belongs to the peroxiredoxin family. AhpC/Prx1 subfamily. As to quaternary structure, homodimer; disulfide-linked, upon oxidation. 5 homodimers assemble to form a ring-like decamer. Interacts with GDPD5; forms a mixed-disulfide with GDPD5. Interacts with SESN1 and SESN2. Interacts with FAM107A. Post-translationally, phosphorylated on Thr-90 during the M-phase, which leads to a decrease in enzymatic activity. In terms of processing, acetylation increases reducing activity and resistance to superoxidation. Deacetylated by HDAC6 which decreases reducing activity.

The protein localises to the cytoplasm. The enzyme catalyses a hydroperoxide + [thioredoxin]-dithiol = an alcohol + [thioredoxin]-disulfide + H2O. Thiol-specific peroxidase that catalyzes the reduction of hydrogen peroxide and organic hydroperoxides to water and alcohols, respectively. Plays a role in cell protection against oxidative stress by detoxifying peroxides and as sensor of hydrogen peroxide-mediated signaling events. Might participate in the signaling cascades of growth factors and tumor necrosis factor-alpha by regulating the intracellular concentrations of H(2)O(2). Reduces an intramolecular disulfide bond in GDPD5 that gates the ability to GDPD5 to drive postmitotic motor neuron differentiation. The protein is Peroxiredoxin-1 (PRDX1) of Cricetulus griseus (Chinese hamster).